The primary structure comprises 66 residues: Large ribosomal subunit protein uL29 (66 aa).

The protein belongs to the universal ribosomal protein uL29 family.

The polypeptide is Large ribosomal subunit protein uL29 (Helicobacter pylori (strain P12)).